Consider the following 470-residue polypeptide: UTP--glucose-1-phosphate uridylyltransferase 1 (470 aa).

Alanine 2 is modified (N-acetylalanine). Residues 86–89, lysine 100, glutamine 163, and glycine 192 contribute to the UTP site; that span reads LNGG. 88–89 contributes to the substrate binding site; that stretch reads GG. Substrate-binding positions include histidine 193 and 221 to 223; that span reads NSD. The UTP site is built by aspartate 223 and lysine 361.

The protein belongs to the UDPGP type 1 family. As to expression, expressed in roots, rosette leaves, cauline leaves, stems, flowers and siliques.

It localises to the cytoplasm. The catalysed reaction is alpha-D-glucose 1-phosphate + UTP + H(+) = UDP-alpha-D-glucose + diphosphate. Its function is as follows. Converts glucose 1-phosphate to UDP-glucose, which is the major glycosyl donor for polysaccharides. Acts redundantly with UGP2 and is essential for the synthesis of sucrose, starch and cell wall, and callose deposition. Involved in the regulation of the programmed cell death (PCD) induced by the fungal toxin fumonisin B1 (FB1). This chain is UTP--glucose-1-phosphate uridylyltransferase 1, found in Arabidopsis thaliana (Mouse-ear cress).